Reading from the N-terminus, the 839-residue chain is Taste receptor type 1 member 2 (839 aa).

A signal peptide spans 1-19 (MGPRAKTICSLFFLLWVLA). Residues 20 to 566 (EPAENSDFYL…VFLEWHEAPT (547 aa)) lie on the Extracellular side of the membrane. N-linked (GlcNAc...) asparagine glycans are attached at residues N84, N248, N292, N312, N368, N407, N428, N487, and N527. The chain crosses the membrane as a helical span at residues 567–587 (IAVALLAALGFLSTLAILVIF). The Cytoplasmic portion of the chain corresponds to 588–602 (WRHFQTPIVRSAGGP). A helical membrane pass occupies residues 603–623 (MCFLMLTLLLVAYMVVPVYVG). Over 624–635 (PPKVSTCLCRQA) the chain is Extracellular. A helical transmembrane segment spans residues 636-656 (LFPLCFTICISCIAVRSFQIV). Topologically, residues 657–681 (CAFKMASRFPRAYSYWVRYQGPYVS) are cytoplasmic. A helical membrane pass occupies residues 682 to 702 (MAFITVLKMVIVVIGMLATGL). Residues 703 to 727 (SPTTRTDPDDPKITIVSCNPNYRNS) are Extracellular-facing. A helical membrane pass occupies residues 728–748 (LLFNTSLDLLLSVVGFSFAYM). The Cytoplasmic segment spans residues 749 to 760 (GKELPTNYNEAK). A helical transmembrane segment spans residues 761 to 781 (FITLSMTFYFTSSVSLCTFMS). Residues 782–784 (AYS) are Extracellular-facing. The helical transmembrane segment at 785 to 805 (GVLVTIVDLLVTVLNLLAISL) threads the bilayer. Topologically, residues 806-839 (GYFGPKCYMILFYPERNTSAYFNSMIQGYTMRRD) are cytoplasmic.

Belongs to the G-protein coupled receptor 3 family. TAS1R subfamily. As to quaternary structure, forms heterodimers with TAS1R3.

The protein localises to the cell membrane. In terms of biological role, putative taste receptor. TAS1R2/TAS1R3 recognizes diverse natural and synthetic sweeteners. This chain is Taste receptor type 1 member 2 (TAS1R2), found in Pan troglodytes (Chimpanzee).